Consider the following 62-residue polypeptide: Large ribosomal subunit protein uL30 (62 aa).

This sequence belongs to the universal ribosomal protein uL30 family. Part of the 50S ribosomal subunit.

This Shewanella frigidimarina (strain NCIMB 400) protein is Large ribosomal subunit protein uL30.